The chain runs to 361 residues: P2Y purinoceptor 4 (361 aa).

Residues 1–20 form a disordered region; it reads MTSAESLLFTSLGPSPSSGD. At 1 to 30 the chain is on the extracellular side; the sequence is MTSAESLLFTSLGPSPSSGDGDCRFNEEFK. Residues 31–58 form a helical membrane-spanning segment; it reads FILLPMSYAVVFVLGLALNAPTLWLFLF. Topologically, residues 59 to 68 are cytoplasmic; the sequence is RLRPWDATAT. A helical membrane pass occupies residues 69–91; it reads YMFHLALSDTLYVLSLPTLVYYY. Residues 92 to 108 lie on the Extracellular side of the membrane; the sequence is AARNHWPFGTGLCKFVR. Cysteines 104 and 181 form a disulfide. Residues 109 to 127 traverse the membrane as a helical segment; that stretch reads FLFYWNLYCSVLFLTCISV. The Cytoplasmic portion of the chain corresponds to 128-149; it reads HRYLGICHPLRAIRWGRPRFAS. The helical transmembrane segment at 150–170 threads the bilayer; sequence LLCLGVWLVVAGCLVPNLFFV. The Extracellular segment spans residues 171–192; it reads TTNANGTTILCHDTTLPEEFDH. A glycan (N-linked (GlcNAc...) asparagine) is linked at asparagine 175. Residues 193 to 218 traverse the membrane as a helical segment; it reads YVYFSSAVMVLLFGLPFLITLVCYGL. Residues 219 to 242 are Cytoplasmic-facing; it reads MARRLYRPLPGAGQSSSRLRSLRT. Residues 243–265 traverse the membrane as a helical segment; the sequence is IAVVLTVFAVCFVPFHITRTIYY. Residues 266 to 283 are Extracellular-facing; it reads QARLLQADCHVLNIVNVV. Residues 284-305 traverse the membrane as a helical segment; the sequence is YKVTRPLASANSCLDPVLYLFT. The Cytoplasmic segment spans residues 306–361; the sequence is GDKYRNQLQQLCRGSKPKPRTAASSLALVTLHEESISRWADTHQDSTFSAYEGDRL.

Belongs to the G-protein coupled receptor 1 family. Phosphorylation of Ser-329 and Ser-330 is a key step in agonist-dependent desensitization and loss of surface P2RY4. This phosphorylation does not involve PKC, nor other calcium-activated kinases. In terms of tissue distribution, widely expressed at low levels. In brain, higher expression in the pineal gland and ventricular system.

It localises to the cell membrane. Receptor for ATP and UTP coupled to G-proteins that activate a phosphatidylinositol-calcium second messenger system. Not activated by ADP or UDP. The sequence is that of P2Y purinoceptor 4 (P2ry4) from Rattus norvegicus (Rat).